Reading from the N-terminus, the 396-residue chain is Ribosomal RNA large subunit methyltransferase I (396 aa).

The region spanning 2–81 (SVRLVLAKGR…ESIDIAFFSR (80 aa)) is the PUA domain.

The protein belongs to the methyltransferase superfamily. RlmI family.

The protein resides in the cytoplasm. It catalyses the reaction cytidine(1962) in 23S rRNA + S-adenosyl-L-methionine = 5-methylcytidine(1962) in 23S rRNA + S-adenosyl-L-homocysteine + H(+). In terms of biological role, specifically methylates the cytosine at position 1962 (m5C1962) of 23S rRNA. This is Ribosomal RNA large subunit methyltransferase I from Shigella flexneri.